We begin with the raw amino-acid sequence, 452 residues long: Phosphoglucosamine mutase 2 (452 aa).

The active-site Phosphoserine intermediate is the Ser-101. Mg(2+)-binding residues include Ser-101, Asp-245, Asp-247, and Asp-249. Ser-101 bears the Phosphoserine mark.

Belongs to the phosphohexose mutase family. Requires Mg(2+) as cofactor. Activated by phosphorylation.

It carries out the reaction alpha-D-glucosamine 1-phosphate = D-glucosamine 6-phosphate. Catalyzes the conversion of glucosamine-6-phosphate to glucosamine-1-phosphate. This chain is Phosphoglucosamine mutase 2, found in Shewanella amazonensis (strain ATCC BAA-1098 / SB2B).